Consider the following 853-residue polypeptide: Dynamin-A (853 aa).

One can recognise a Dynamin-type G domain in the interval 22-296; that stretch reads PLDLPQIVVV…LMFHIRDTLP (275 aa). Residues 32–39 are G1 motif; sequence GSQSSGKS. A GTP-binding site is contributed by 32 to 40; that stretch reads GSQSSGKSS. Positions 58–60 are G2 motif; sequence VTR. Positions 138 to 141 are G3 motif; that stretch reads DLPG. The G4 motif stretch occupies residues 207 to 210; the sequence is TKLD. GTP is bound by residues 207–213 and 238–241; these read TKLDLMD and NRSQ. The tract at residues 237-240 is G5 motif; that stretch reads INRS. Composition is skewed to low complexity over residues 523–569 and 590–607; these read DQYQ…QQNQ and PAQQQPNQQPNQLNKGPQ. The segment at 523 to 738 is disordered; sequence DQYQQQQQQQ…RYQDDFYGRG (216 aa). A compositionally biased stretch (polar residues) spans 610–624; that stretch reads PPNQSKPSSIPQNGP. Low complexity-rich tracts occupy residues 625–635 and 664–728; these read NNNNNNNNNNN and NNSN…SSYN. The GED domain maps to 762-853; it reads TELIRELLIS…IINEIRDFRN (92 aa).

Belongs to the TRAFAC class dynamin-like GTPase superfamily. Dynamin/Fzo/YdjA family.

The protein localises to the cytoplasm. In terms of biological role, function in membrane trafficking processes along the endo-lysosomal pathway. The protein is Dynamin-A (dymA) of Dictyostelium discoideum (Social amoeba).